The primary structure comprises 634 residues: Chaperone protein dnaK2 (634 aa).

Residue Thr-197 is modified to Phosphothreonine; by autocatalysis. The span at 601–623 shows a compositional bias: low complexity; the sequence is GAAAAESGADAGAAGAGDSSSGD. A disordered region spans residues 601–634; that stretch reads GAAAAESGADAGAAGAGDSSSGDDVIDAEFTESK. The span at 624-634 shows a compositional bias: acidic residues; it reads DVIDAEFTESK.

Belongs to the heat shock protein 70 family.

In terms of biological role, acts as a chaperone. The polypeptide is Chaperone protein dnaK2 (dnaK2) (Prochlorococcus marinus (strain MIT 9313)).